The sequence spans 146 residues: MKKVLLVNGPNLNRLGVREVNVYGKGTLATLEADMKQEAETMGVELECFQSNHEGAIIDRIHEAEDIYEGIILNPGAFTHYSYAIRDAIASISIPVIEVHISNIHQRESFRHESVTAAVCAGQIVGFGFYGYKLALFALMEKLREA.

Catalysis depends on Y23, which acts as the Proton acceptor. Substrate-binding residues include N74, H80, and D87. The Proton donor role is filled by H100. Residues 101–102 (IS) and R111 each bind substrate.

Belongs to the type-II 3-dehydroquinase family. Homododecamer.

It carries out the reaction 3-dehydroquinate = 3-dehydroshikimate + H2O. The protein operates within metabolic intermediate biosynthesis; chorismate biosynthesis; chorismate from D-erythrose 4-phosphate and phosphoenolpyruvate: step 3/7. Its function is as follows. Catalyzes a trans-dehydration via an enolate intermediate. The sequence is that of 3-dehydroquinate dehydratase from Bacillus cereus (strain ATCC 10987 / NRS 248).